Consider the following 154-residue polypeptide: Low molecular weight protein-tyrosine-phosphatase PtpA (154 aa).

The Nucleophile role is filled by cysteine 8. Residue arginine 14 is part of the active site. Residue aspartate 120 is the Proton donor of the active site.

It belongs to the low molecular weight phosphotyrosine protein phosphatase family. Interacts with host CORO1A. Post-translationally, phosphorylations at Tyr-122 and Tyr-123 are essential for phosphatase activity.

The protein resides in the secreted. The enzyme catalyses O-phospho-L-tyrosyl-[protein] + H2O = L-tyrosyl-[protein] + phosphate. Functionally, secreted tyrosine phosphatase that plays a critical role during infection as a bacterial effector protein that counteracts host defenses. Required for intramacrophage survival. In Staphylococcus aureus (strain MRSA252), this protein is Low molecular weight protein-tyrosine-phosphatase PtpA (ptpA).